A 66-amino-acid chain; its full sequence is uncharacterized protein (66 aa).

The protein to E.coli YfhJ.

This is an uncharacterized protein from Pseudomonas aeruginosa (strain ATCC 15692 / DSM 22644 / CIP 104116 / JCM 14847 / LMG 12228 / 1C / PRS 101 / PAO1).